The chain runs to 206 residues: Small ribosomal subunit protein uS4 (206 aa).

The S4 RNA-binding domain occupies 96–158 (GRLDNVVYRM…AKKQSRIKAA (63 aa)).

It belongs to the universal ribosomal protein uS4 family. In terms of assembly, part of the 30S ribosomal subunit. Contacts protein S5. The interaction surface between S4 and S5 is involved in control of translational fidelity.

Its function is as follows. One of the primary rRNA binding proteins, it binds directly to 16S rRNA where it nucleates assembly of the body of the 30S subunit. With S5 and S12 plays an important role in translational accuracy. In Vibrio cholerae serotype O1 (strain ATCC 39541 / Classical Ogawa 395 / O395), this protein is Small ribosomal subunit protein uS4.